The chain runs to 250 residues: Ubiquinone biosynthesis O-methyltransferase (250 aa).

S-adenosyl-L-methionine-binding residues include Arg41, Gly72, Asp93, and Met136.

Belongs to the methyltransferase superfamily. UbiG/COQ3 family.

The catalysed reaction is a 3-demethylubiquinol + S-adenosyl-L-methionine = a ubiquinol + S-adenosyl-L-homocysteine + H(+). It catalyses the reaction a 3-(all-trans-polyprenyl)benzene-1,2-diol + S-adenosyl-L-methionine = a 2-methoxy-6-(all-trans-polyprenyl)phenol + S-adenosyl-L-homocysteine + H(+). The protein operates within cofactor biosynthesis; ubiquinone biosynthesis. Functionally, O-methyltransferase that catalyzes the 2 O-methylation steps in the ubiquinone biosynthetic pathway. This chain is Ubiquinone biosynthesis O-methyltransferase, found in Agrobacterium fabrum (strain C58 / ATCC 33970) (Agrobacterium tumefaciens (strain C58)).